The following is a 309-amino-acid chain: Taste receptor type 2 member 105 (309 aa).

Residues 1 to 9 (MLSAAEGIL) are Extracellular-facing. The chain crosses the membrane as a helical span at residues 10 to 32 (LSIATVEAGLGVLGNTFIALVNC). Over 33-44 (MDWAKNKKLSKI) the chain is Cytoplasmic. A helical membrane pass occupies residues 45–67 (GFLLFGLATSRIFIVWILILDAY). Topologically, residues 68-86 (AKLFFPGKYLSKSLTEIIS) are extracellular. Residues 87–109 (CIWMTVNHMTVWFATSLSIFYFL) form a helical membrane-spanning segment. Over 110–129 (KIANFSHYIFLWLKRRTDKV) the chain is Cytoplasmic. A helical transmembrane segment spans residues 130–149 (FAFLLWCLLISWAISFSFTV). The Extracellular portion of the chain corresponds to 150-177 (KVMKSNPKNHGNRTSGTHWEKREFTSNY). A glycan (N-linked (GlcNAc...) asparagine) is linked at asparagine 161. The chain crosses the membrane as a helical span at residues 178-200 (VLINIGVISLLIMTLTACFLLII). Over 201-226 (SLWKHSRQMQSNVSGFRDLNTEAHVK) the chain is Cytoplasmic. A helical membrane pass occupies residues 227 to 249 (AIKFLISFIILFILYFIGVAVEI). Over 250–258 (ICMFIPENK) the chain is Extracellular. A helical membrane pass occupies residues 259–281 (LLFIFGLTTASVYPCCHSVILIL). At 282–309 (TNSQLKQAFVKVLEGLKFSENGKDLRAT) the chain is on the cytoplasmic side.

Belongs to the G-protein coupled receptor T2R family. Expressed in subsets of taste receptor cells of the tongue and palate epithelium and exclusively in gustducin-positive cells. Expressed in 15% taste bud cells in circumvallate and foliate papillae but only in 2% in fungiform papillae. Expressed in the duodenum, antrum and fundus (part of the stomach).

It is found in the membrane. In terms of biological role, gustducin-coupled cycloheximide receptor implicated in the perception of bitter compounds in the oral cavity and the gastrointestinal tract. Signals through PLCB2 and the calcium-regulated cation channel TRPM5. The chain is Taste receptor type 2 member 105 (Tas2r105) from Rattus norvegicus (Rat).